The following is a 792-amino-acid chain: Phenylalanine--tRNA ligase beta subunit (792 aa).

Positions 38–148 (NTKLAGFIVA…DDYKVGNKFF (111 aa)) constitute a tRNA-binding domain. The B5 domain occupies 406–482 (EADTKVSFDY…RIYGYDKIKE (77 aa)). Mg(2+)-binding residues include aspartate 460, aspartate 466, glutamate 469, and glutamate 470. An FDX-ACB domain is found at 698–790 (YKHQSVKRDF…VHKNTGGILR (93 aa)).

Belongs to the phenylalanyl-tRNA synthetase beta subunit family. Type 1 subfamily. Tetramer of two alpha and two beta subunits. Mg(2+) serves as cofactor.

Its subcellular location is the cytoplasm. The catalysed reaction is tRNA(Phe) + L-phenylalanine + ATP = L-phenylalanyl-tRNA(Phe) + AMP + diphosphate + H(+). The protein is Phenylalanine--tRNA ligase beta subunit of Wolbachia sp. subsp. Brugia malayi (strain TRS).